The primary structure comprises 99 residues: Aspartyl/glutamyl-tRNA(Asn/Gln) amidotransferase subunit C (99 aa).

It belongs to the GatC family. As to quaternary structure, heterotrimer of A, B and C subunits.

The catalysed reaction is L-glutamyl-tRNA(Gln) + L-glutamine + ATP + H2O = L-glutaminyl-tRNA(Gln) + L-glutamate + ADP + phosphate + H(+). It catalyses the reaction L-aspartyl-tRNA(Asn) + L-glutamine + ATP + H2O = L-asparaginyl-tRNA(Asn) + L-glutamate + ADP + phosphate + 2 H(+). Allows the formation of correctly charged Asn-tRNA(Asn) or Gln-tRNA(Gln) through the transamidation of misacylated Asp-tRNA(Asn) or Glu-tRNA(Gln) in organisms which lack either or both of asparaginyl-tRNA or glutaminyl-tRNA synthetases. The reaction takes place in the presence of glutamine and ATP through an activated phospho-Asp-tRNA(Asn) or phospho-Glu-tRNA(Gln). This Bifidobacterium longum (strain NCC 2705) protein is Aspartyl/glutamyl-tRNA(Asn/Gln) amidotransferase subunit C.